A 407-amino-acid chain; its full sequence is Imidazolonepropionase (407 aa).

Positions 74 and 76 each coordinate Fe(3+). Residues His74 and His76 each coordinate Zn(2+). Residues Arg83, Tyr146, and His179 each contribute to the 4-imidazolone-5-propanoate site. Position 146 (Tyr146) interacts with N-formimidoyl-L-glutamate. Residue His244 participates in Fe(3+) binding. His244 provides a ligand contact to Zn(2+). A 4-imidazolone-5-propanoate-binding site is contributed by Gln247. Fe(3+) is bound at residue Asp319. A Zn(2+)-binding site is contributed by Asp319. Asn321 and Gly323 together coordinate N-formimidoyl-L-glutamate. Thr324 contacts 4-imidazolone-5-propanoate.

This sequence belongs to the metallo-dependent hydrolases superfamily. HutI family. The cofactor is Zn(2+). Fe(3+) is required as a cofactor.

The protein localises to the cytoplasm. The enzyme catalyses 4-imidazolone-5-propanoate + H2O = N-formimidoyl-L-glutamate. Its pathway is amino-acid degradation; L-histidine degradation into L-glutamate; N-formimidoyl-L-glutamate from L-histidine: step 3/3. Its function is as follows. Catalyzes the hydrolytic cleavage of the carbon-nitrogen bond in imidazolone-5-propanoate to yield N-formimidoyl-L-glutamate. It is the third step in the universal histidine degradation pathway. This Salmonella heidelberg (strain SL476) protein is Imidazolonepropionase.